The sequence spans 360 residues: Lipid-A-disaccharide synthase (360 aa).

Belongs to the LpxB family.

It catalyses the reaction a lipid X + a UDP-2-N,3-O-bis[(3R)-3-hydroxyacyl]-alpha-D-glucosamine = a lipid A disaccharide + UDP + H(+). It participates in bacterial outer membrane biogenesis; LPS lipid A biosynthesis. Condensation of UDP-2,3-diacylglucosamine and 2,3-diacylglucosamine-1-phosphate to form lipid A disaccharide, a precursor of lipid A, a phosphorylated glycolipid that anchors the lipopolysaccharide to the outer membrane of the cell. The protein is Lipid-A-disaccharide synthase (lpxB) of Helicobacter pylori (strain J99 / ATCC 700824) (Campylobacter pylori J99).